Consider the following 240-residue polypeptide: MIINAKGPASFAEKYIVRSIWENKFPPGSILPAERELSELIGVTRTTLREVLQRLARDGWLKIQHGKPTRVNNFWETSGLNILETIADLNPEGFPVLVDQLLSARTNVSAIYFRGALRNNPDTAMEVLAQIHQLEDTAESFAEYDYLLHHTLAFSSGNPLYVLILNGFKGLYSRVGRYYFSSSEARQLALNFYKELELLAKAKNYLDVPALMRTYGINSGKMWLQLRDDMPSSIAQQDSH.

The HTH gntR-type domain maps to 6–74 (KGPASFAEKY…HGKPTRVNNF (69 aa)). A DNA-binding region (H-T-H motif) is located at residues 34-53 (ERELSELIGVTRTTLREVLQ).

Homodimer.

The protein resides in the cytoplasm. In terms of biological role, multifunctional regulator of fatty acid metabolism. This is Fatty acid metabolism regulator protein from Shewanella oneidensis (strain ATCC 700550 / JCM 31522 / CIP 106686 / LMG 19005 / NCIMB 14063 / MR-1).